Consider the following 156-residue polypeptide: MLTHLDSQGRANMVDVTEKAVTEREATAEARVRMLPQTLQMIVEGEHPKGDVFAVARIAGIQAAKKTSDLIPLCHPLMLTSVKVELSAEGTDAVRIVARCKLAGQTGVEMEALTAASVAALTIYDMCKAVDKGMVIEQVRLLEKLGGKSGHYKVDA.

Residues 73-75 (LCH) and 110-111 (ME) each bind substrate. Residue Asp125 is part of the active site.

This sequence belongs to the MoaC family. In terms of assembly, homohexamer; trimer of dimers.

It catalyses the reaction (8S)-3',8-cyclo-7,8-dihydroguanosine 5'-triphosphate = cyclic pyranopterin phosphate + diphosphate. It functions in the pathway cofactor biosynthesis; molybdopterin biosynthesis. Functionally, catalyzes the conversion of (8S)-3',8-cyclo-7,8-dihydroguanosine 5'-triphosphate to cyclic pyranopterin monophosphate (cPMP). This is Cyclic pyranopterin monophosphate synthase from Pseudomonas putida (strain W619).